The sequence spans 423 residues: D-tagatose-1,6-bisphosphate aldolase subunit GatZ (423 aa).

The protein belongs to the GatZ/KbaZ family. GatZ subfamily. As to quaternary structure, forms a complex with GatY.

Its pathway is carbohydrate metabolism; D-tagatose 6-phosphate degradation; D-glyceraldehyde 3-phosphate and glycerone phosphate from D-tagatose 6-phosphate: step 2/2. Functionally, component of the tagatose-1,6-bisphosphate aldolase GatYZ that is required for full activity and stability of the Y subunit. Could have a chaperone-like function for the proper and stable folding of GatY. When expressed alone, GatZ does not show any aldolase activity. Is involved in the catabolism of galactitol. The sequence is that of D-tagatose-1,6-bisphosphate aldolase subunit GatZ from Salmonella newport (strain SL254).